Reading from the N-terminus, the 546-residue chain is Pyrophosphate--fructose 6-phosphate 1-phosphotransferase (546 aa).

Diphosphate is bound at residue Gly-80. Asp-174 provides a ligand contact to Mg(2+). Substrate-binding positions include 202–204 (TID), 241–242 (KY), 249–251 (MGR), Glu-310, and 420–423 (YEGR). Asp-204 functions as the Proton acceptor in the catalytic mechanism.

The protein belongs to the phosphofructokinase type A (PFKA) family. PPi-dependent PFK group II subfamily. Clade 'Long' sub-subfamily. As to quaternary structure, homodimer. The cofactor is Mg(2+). Requires Mn(2+) as cofactor.

Its subcellular location is the cytoplasm. It carries out the reaction beta-D-fructose 6-phosphate + diphosphate = beta-D-fructose 1,6-bisphosphate + phosphate + H(+). It functions in the pathway carbohydrate degradation; glycolysis; D-glyceraldehyde 3-phosphate and glycerone phosphate from D-glucose: step 3/4. Its activity is regulated as follows. Non-allosteric. Competitively inhibited by PPi, Pi and fructose 1,6-bisphosphate. Functionally, catalyzes the phosphorylation of D-fructose 6-phosphate, the first committing step of glycolysis. Uses inorganic phosphate (PPi) as phosphoryl donor instead of ATP like common ATP-dependent phosphofructokinases (ATP-PFKs), which renders the reaction reversible, and can thus function both in glycolysis and gluconeogenesis. Consistently, PPi-PFK can replace the enzymes of both the forward (ATP-PFK) and reverse (fructose-bisphosphatase (FBPase)) reactions. The sequence is that of Pyrophosphate--fructose 6-phosphate 1-phosphotransferase from Entamoeba histolytica (strain ATCC 30459 / HM-1:IMSS / ABRM).